The chain runs to 211 residues: Orotidine 5'-phosphate decarboxylase (211 aa).

Substrate is bound by residues Asp7, Lys29, Asp57–Thr66, Ser109, Pro162–Val172, Gly185, and Arg186. Catalysis depends on Lys59, which acts as the Proton donor.

The protein belongs to the OMP decarboxylase family. Type 1 subfamily. As to quaternary structure, homodimer.

It carries out the reaction orotidine 5'-phosphate + H(+) = UMP + CO2. It functions in the pathway pyrimidine metabolism; UMP biosynthesis via de novo pathway; UMP from orotate: step 2/2. In terms of biological role, catalyzes the decarboxylation of orotidine 5'-monophosphate (OMP) to uridine 5'-monophosphate (UMP). This chain is Orotidine 5'-phosphate decarboxylase, found in Pyrococcus furiosus (strain ATCC 43587 / DSM 3638 / JCM 8422 / Vc1).